We begin with the raw amino-acid sequence, 358 residues long: Alanine racemase (358 aa).

Lysine 35 acts as the Proton acceptor; specific for D-alanine in catalysis. Lysine 35 is modified (N6-(pyridoxal phosphate)lysine). Arginine 130 serves as a coordination point for substrate. Catalysis depends on tyrosine 255, which acts as the Proton acceptor; specific for L-alanine. Residue methionine 303 coordinates substrate.

Belongs to the alanine racemase family. Pyridoxal 5'-phosphate serves as cofactor.

The catalysed reaction is L-alanine = D-alanine. It functions in the pathway amino-acid biosynthesis; D-alanine biosynthesis; D-alanine from L-alanine: step 1/1. Functionally, catalyzes the interconversion of L-alanine and D-alanine. May also act on other amino acids. The sequence is that of Alanine racemase (alr) from Shewanella loihica (strain ATCC BAA-1088 / PV-4).